We begin with the raw amino-acid sequence, 153 residues long: Large ribosomal subunit protein bL9 (153 aa).

Belongs to the bacterial ribosomal protein bL9 family.

Its function is as follows. Binds to the 23S rRNA. The chain is Large ribosomal subunit protein bL9 from Mycoplasma mycoides subsp. mycoides SC (strain CCUG 32753 / NCTC 10114 / PG1).